The primary structure comprises 504 residues: ATP synthase subunit alpha 1 (504 aa).

170–177 is a binding site for ATP; sequence GDRQIGKT.

The protein belongs to the ATPase alpha/beta chains family. In terms of assembly, F-type ATPases have 2 components, CF(1) - the catalytic core - and CF(0) - the membrane proton channel. CF(1) has five subunits: alpha(3), beta(3), gamma(1), delta(1), epsilon(1). CF(0) has three main subunits: a(1), b(2) and c(9-12). The alpha and beta chains form an alternating ring which encloses part of the gamma chain. CF(1) is attached to CF(0) by a central stalk formed by the gamma and epsilon chains, while a peripheral stalk is formed by the delta and b chains.

The protein resides in the cell inner membrane. It carries out the reaction ATP + H2O + 4 H(+)(in) = ADP + phosphate + 5 H(+)(out). In terms of biological role, produces ATP from ADP in the presence of a proton gradient across the membrane. The alpha chain is a regulatory subunit. This chain is ATP synthase subunit alpha 1, found in Syntrophus aciditrophicus (strain SB).